Consider the following 261-residue polypeptide: Calcium-binding protein 8 (261 aa).

The interval 1 to 39 is disordered; it reads MRLPEQPGEGKPENEKKGDGGALGGGEEPPRSQAPDFPT. Residues 1–234 lie on the Cytoplasmic side of the membrane; it reads MRLPEQPGEG…QNRQTCVRKS (234 aa). Residues 8–19 show a composition bias toward basic and acidic residues; that stretch reads GEGKPENEKKGD. EF-hand domains are found at residues 78-113 and 114-149; these read EELDEIREAFRVLDRDGNGFISKQELGMAMRSLGYM and PSEVELAIIMQRLDMDGDGQVDFDEFMTILGPKLVS. 9 residues coordinate Ca(2+): D91, D93, N95, E102, D127, D129, D131, Q133, and E138. The helical; Anchor for type IV membrane protein transmembrane segment at 235–255 threads the bilayer; it reads LICAFAMAFIISVMLIAANQI. Residues 256 to 261 lie on the Extracellular side of the membrane; the sequence is LRSGME.

As to quaternary structure, interacts with PI4KB. This binding competes with FREQ/NCS1 binding in a calcium-dependent manner. In terms of tissue distribution, brain specific.

It localises to the golgi apparatus. The protein resides in the trans-Golgi network membrane. The protein localises to the cytoplasm. It is found in the perinuclear region. Its subcellular location is the cell membrane. Its function is as follows. Negatively regulates Golgi-to-plasma membrane trafficking by interacting with PI4KB and inhibiting its activity. May play a role in the physiology of neurons and is potentially important in memory and learning. The sequence is that of Calcium-binding protein 8 (CALN1) from Homo sapiens (Human).